The chain runs to 122 residues: Large ribosomal subunit protein uL14 (122 aa).

Belongs to the universal ribosomal protein uL14 family. In terms of assembly, part of the 50S ribosomal subunit. Forms a cluster with proteins L3 and L19. In the 70S ribosome, L14 and L19 interact and together make contacts with the 16S rRNA in bridges B5 and B8.

Binds to 23S rRNA. Forms part of two intersubunit bridges in the 70S ribosome. The chain is Large ribosomal subunit protein uL14 from Psychromonas ingrahamii (strain DSM 17664 / CCUG 51855 / 37).